A 296-amino-acid polypeptide reads, in one-letter code: Peptide transport system permease protein SapC (296 aa).

The Cytoplasmic portion of the chain corresponds to 1-28; it reads MPYDSVYSEKRPPGTLRTAWRKFYSDAP. The chain crosses the membrane as a helical span at residues 29–49; it reads AMVGLYGCAGLALLCIFGGWI. The Periplasmic portion of the chain corresponds to 50 to 98; sequence APYGIDQQFLGYQLLPPSWSRYGEVSFFLGTDDLGRDVLSRLLSGAAPT. Residues 99–119 form a helical membrane-spanning segment; sequence VGGAFIVTLAATLCGLVLGVV. In terms of domain architecture, ABC transmembrane type-1 spans 99–284; sequence VGGAFIVTLA…LSVLLVNLLG (186 aa). Over 120-133 the chain is Cytoplasmic; that stretch reads AGATHGLRSAVLNH. The helical transmembrane segment at 134–154 threads the bilayer; that stretch reads ILDTLLSIPSLLLAIIVVAFA. The Periplasmic portion of the chain corresponds to 155 to 196; sequence GPHLSHAMFAVWLALLPRMVRSVYSMVHDELEKEYVIAARLD. The chain crosses the membrane as a helical span at residues 197–217; the sequence is GATTLNILWFAILPNITAGLV. Residues 218–222 are Cytoplasmic-facing; the sequence is TEITR. A helical transmembrane segment spans residues 223-243; that stretch reads ALSMAILDIAALGFLDLGAQL. Residues 244–257 are Periplasmic-facing; it reads PSPEWGAMLGDALE. Residues 258–278 traverse the membrane as a helical segment; that stretch reads LIYVAPWTVMLPGAAITLSVL. At 279–296 the chain is on the cytoplasmic side; it reads LVNLLGDGIRRAIIAGVE.

Belongs to the binding-protein-dependent transport system permease family. OppBC subfamily.

The protein resides in the cell inner membrane. In terms of biological role, involved in a peptide intake transport system that plays a role in the resistance to antimicrobial peptides. The sequence is that of Peptide transport system permease protein SapC (sapC) from Salmonella typhi.